Consider the following 455-residue polypeptide: Glutamyl-tRNA reductase (455 aa).

Substrate-binding positions include 49–52, Ser109, 114–116, and Gln120; these read TCNR and ETQ. The Nucleophile role is filled by Cys50. 189 to 194 is an NADP(+) binding site; that stretch reads GAGKMG.

The protein belongs to the glutamyl-tRNA reductase family. In terms of assembly, homodimer.

It carries out the reaction (S)-4-amino-5-oxopentanoate + tRNA(Glu) + NADP(+) = L-glutamyl-tRNA(Glu) + NADPH + H(+). Its pathway is porphyrin-containing compound metabolism; protoporphyrin-IX biosynthesis; 5-aminolevulinate from L-glutamyl-tRNA(Glu): step 1/2. Functionally, catalyzes the NADPH-dependent reduction of glutamyl-tRNA(Glu) to glutamate 1-semialdehyde (GSA). In Geobacillus thermodenitrificans (strain NG80-2), this protein is Glutamyl-tRNA reductase.